Consider the following 354-residue polypeptide: Uroporphyrinogen decarboxylase (354 aa).

Substrate-binding positions include 27-31 (RQAGR), Asp77, Tyr154, Ser209, and His327.

Belongs to the uroporphyrinogen decarboxylase family. As to quaternary structure, homodimer.

The protein localises to the cytoplasm. It carries out the reaction uroporphyrinogen III + 4 H(+) = coproporphyrinogen III + 4 CO2. Its pathway is porphyrin-containing compound metabolism; protoporphyrin-IX biosynthesis; coproporphyrinogen-III from 5-aminolevulinate: step 4/4. Catalyzes the decarboxylation of four acetate groups of uroporphyrinogen-III to yield coproporphyrinogen-III. The chain is Uroporphyrinogen decarboxylase from Shewanella sp. (strain ANA-3).